Reading from the N-terminus, the 341-residue chain is Glyceraldehyde-3-phosphate dehydrogenase 1 (341 aa).

NAD(+) contacts are provided by residues 13–14 (RI), Asp35, and Lys85. D-glyceraldehyde 3-phosphate-binding positions include 157 to 159 (SCT), Thr188, 217 to 218 (TG), and Arg240. The Nucleophile role is filled by Cys158. NAD(+) is bound at residue Asn322.

The protein belongs to the glyceraldehyde-3-phosphate dehydrogenase family. Homotetramer.

Its subcellular location is the cytoplasm. The catalysed reaction is D-glyceraldehyde 3-phosphate + phosphate + NAD(+) = (2R)-3-phospho-glyceroyl phosphate + NADH + H(+). Its pathway is carbohydrate degradation; glycolysis; pyruvate from D-glyceraldehyde 3-phosphate: step 1/5. The protein is Glyceraldehyde-3-phosphate dehydrogenase 1 (gpd-1) of Caenorhabditis elegans.